Here is a 345-residue protein sequence, read N- to C-terminus: MSRWSVSQGCGNSHKALRMSGNREQLLSGWGAPGMLRPSMRSEAERQRSFRAWPRSCPQLSPVELARSGFYYLGPGDRVQCFSCGGVLRSWEPGDRPDTEHRKFFPSCPFLQQQQRGPGATDSVDGQVLGQLSGEEPDRTWEPVYPEMSEEQVRLGSFSTWPLDVPGSPEVLAGAGFFYTGHRDHVKCFHCDGGLQNWEQGDDPWTEHAKWFPMCDFLLQVKGEAFIRSVQESLFSSPEPSPESLGSYDYDRSLASSTESVSVPRAPTPGERSEPPKVSGPPLSTEEQLQRLKEERMCKVCMDKDVSMLFVPCGHLVVCTECAPNLRHCPICRAAIRGSVRAFMS.

BIR repeat units lie at residues 46–112 (RQRS…PFLQ) and 154–219 (RLGS…DFLL). Cys-188, Cys-191, His-208, and Cys-215 together coordinate Zn(2+). At Ser-237 the chain carries Phosphoserine. Ser-241 bears the Phosphoserine; by MAPK1 mark. Ser-253 is modified (phosphoserine). Ser-257 is subject to Phosphoserine; by MAPK1. The segment at 258 to 286 (TESVSVPRAPTPGERSEPPKVSGPPLSTE) is disordered. The segment at 298–333 (CKVCMDKDVSMLFVPCGHLVVCTECAPNLRHCPICR) adopts an RING-type zinc-finger fold.

The protein belongs to the IAP family. Post-translationally, auto-ubiquitinated, and degraded in a 2-step mechanism; a caspase-independent first step and a caspase-dependent second step. Phosphorylated via MAPK-dependent and CDK-dependent pathways during oocyte maturation. Phosphorylation does not appear to affect caspase inhibition or autoubiquitination activity.

The protein resides in the cytoplasm. The catalysed reaction is S-ubiquitinyl-[E2 ubiquitin-conjugating enzyme]-L-cysteine + [acceptor protein]-L-lysine = [E2 ubiquitin-conjugating enzyme]-L-cysteine + N(6)-ubiquitinyl-[acceptor protein]-L-lysine.. In terms of biological role, weak apoptotic suppressor. Has E3 ubiquitin-protein ligase activity. Weak inhibitor of caspase activity. This chain is Baculoviral IAP repeat-containing protein 7-B (birc7-b), found in Xenopus laevis (African clawed frog).